The following is a 3390-amino-acid chain: Genome polyprotein (3390 aa).

Residues 1–15 form an interaction with host EXOC1 region; that stretch reads MNNQRKKTGKPSINM. The Cytoplasmic portion of the chain corresponds to 1–100; that stretch reads MNNQRKKTGK…MLSIINQRKK (100 aa). The interval 37 to 72 is hydrophobic; homodimerization of capsid protein C; it reads LLNGQGPMKLVMAFIAFLRFLAIPPTAGVLARWGTF. Positions 101–114 are cleaved as a propeptide — ER anchor for the capsid protein C, removed in mature form by serine protease NS3; that stretch reads TSLCLMMILPAALA. A helical transmembrane segment spans residues 101-120; it reads TSLCLMMILPAALAFHLTSR. Topologically, residues 121–243 are extracellular; sequence DGEPRMIVGK…VEKVETWALR (123 aa). Residue N183 is glycosylated (N-linked (GlcNAc...) asparagine; by host). The helical transmembrane segment at 244 to 264 threads the bilayer; sequence HPGFTILALFLAHYIGTSLTQ. Residue K265 is a topological domain, cytoplasmic. The helical transmembrane segment at 266-280 threads the bilayer; that stretch reads VVIFILLMLVTPSMT. Over 281–723 the chain is Extracellular; the sequence is MRCVGVGNRD…VHQIFGSAYT (443 aa). 4 disulfides stabilise this stretch: C283/C310, C340/C401, C354/C385, and C372/C396. N347 carries an N-linked (GlcNAc...) asparagine; by host glycan. A fusion peptide region spans residues 378 to 391; it reads DRGWGNGCGLFGKG. N433 carries N-linked (GlcNAc...) asparagine; by host glycosylation. 2 disulfides stabilise this stretch: C463-C563 and C580-C611. A helical membrane pass occupies residues 724-744; sequence ALFSGVSWVMKIGIGVLLTWI. Residues 745–750 are Cytoplasmic-facing; that stretch reads GLNSKN. The helical transmembrane segment at 751-771 threads the bilayer; that stretch reads TSMSFSCIAIGIITLYLGAVV. The Extracellular segment spans residues 772-1193; it reads QADMGCVINW…MIGSNASDRM (422 aa). Disulfide bonds link C777–C788, C828–C916, C952–C996, C1053–C1102, C1064–C1086, and C1085–C1089. N-linked (GlcNAc...) asparagine; by host glycosylation is found at N903 and N980. Residues N1132 and N1188 are each glycosylated (N-linked (GlcNAc...) asparagine; by host). A helical transmembrane segment spans residues 1194 to 1218; that stretch reads GMGVTYLALIATFKIQPFLALGFFL. Over 1219 to 1224 the chain is Cytoplasmic; the sequence is RKLTSR. Residues 1225–1243 traverse the membrane as a helical segment; that stretch reads ENLLLGVGLAMATTLQLPE. The Lumenal portion of the chain corresponds to 1244 to 1267; that stretch reads DIEQMANGVALGLMALKLITQFET. Residues 1268-1288 form a helical membrane-spanning segment; it reads YQLWTALVSLTCSNTIFTLTV. A1289 is a topological domain (cytoplasmic). Residues 1290–1308 form a helical membrane-spanning segment; that stretch reads WRTATLILAGVSLLPVCQS. Topologically, residues 1309–1315 are lumenal; it reads SSMRKTD. A helical transmembrane segment spans residues 1316 to 1336; that stretch reads WLPMTVAAMGVPPLPLFIFSL. Residues 1337–1344 lie on the Cytoplasmic side of the membrane; that stretch reads KDTLKRRS. A helical transmembrane segment spans residues 1345–1365; the sequence is WPLNEGVMAVGLVSILASSLL. Topologically, residues 1366 to 1368 are lumenal; sequence RND. A helical transmembrane segment spans residues 1369–1389; that stretch reads VPMAGPLVAGGLLIACYVITG. Residues 1390-1443 lie on the Cytoplasmic side of the membrane; it reads TSADLTVEKAPDVTWEEEAEQTGVSHNLMITVDDDGTMRIKDDETENILTVLLK. The interacts with and activates NS3 protease stretch occupies residues 1396–1435; sequence VEKAPDVTWEEEAEQTGVSHNLMITVDDDGTMRIKDDETE. Positions 1444-1464 form an intramembrane region, helical; that stretch reads TALLIVSGIFPYSIPATLLVW. The Cytoplasmic segment spans residues 1465 to 2146; that stretch reads HTWQKQTQRS…VEELPETMET (682 aa). The region spanning 1474–1651 is the Peptidase S7 domain; the sequence is SGVLWDVPSP…NAEPDGPTPE (178 aa). Catalysis depends on charge relay system; for serine protease NS3 activity residues H1524, D1548, and S1608. The region spanning 1654-1810 is the Helicase ATP-binding domain; that stretch reads EEMFKKRNLT…QSNAPIQDEE (157 aa). The tract at residues 1658-1661 is important for RNA-binding; sequence KKRN. ATP is bound at residue 1667–1674; sequence LHPGSGKT. Positions 1758 to 1761 match the DEAH box motif; sequence DEAH. Positions 1820–1986 constitute a Helicase C-terminal domain; sequence SGNEWITDFA…GIIPALFEPE (167 aa). At K1862 the chain carries N6-acetyllysine; by host. Residues 2147–2167 form a helical membrane-spanning segment; the sequence is LLLLGLMILLTGGAMLFLISG. The Lumenal segment spans residues 2168–2169; that stretch reads KG. The helical intramembrane region spans 2170 to 2190; sequence IGKTSIGLICVIASSGMLWMA. E2191 is a topological domain (lumenal). Residues 2192–2212 traverse the membrane as a helical segment; sequence VPLQWIASAIVLEFFMMVLLI. The Cytoplasmic portion of the chain corresponds to 2213–2227; sequence PEPEKQRTPQDNQLA. A helical transmembrane segment spans residues 2228-2248; sequence YVVIGILTLAATIAANEMGLL. Over 2249–2273 the chain is Lumenal; it reads ETTKRDLGMSKEPGVVSPTSYLDVD. The segment at residues 2274-2294 is an intramembrane region (helical); it reads LHPASAWTLYAVATTVITPML. The Lumenal portion of the chain corresponds to 2295–2305; that stretch reads RHTIENSTANV. Residues N2300 and N2304 are each glycosylated (N-linked (GlcNAc...) asparagine; by host). Positions 2306–2326 form an intramembrane region, helical; the sequence is SLAAIANQAVVLMGLDKGWPI. At 2327-2346 the chain is on the lumenal side; it reads SKMDLGVPLLALGCYSQVNP. A helical membrane pass occupies residues 2347 to 2367; it reads LTLTAAVLLLITHYAIIGPGL. Residues 2368 to 2412 lie on the Cytoplasmic side of the membrane; the sequence is QAKATREAQKRTAAGIMKNPTVDGIMTIDLDSVIFDSKFEKQLGQ. Residues 2413 to 2433 form a helical membrane-spanning segment; it reads VMLLVLCAVQLLLMRTSWALC. The Lumenal portion of the chain corresponds to 2434-2458; it reads EALTLATGPITTLWEGSPGKFWNTT. A glycan (N-linked (GlcNAc...) asparagine; by host) is linked at N2456. The chain crosses the membrane as a helical span at residues 2459–2479; it reads IAVSMANIFRGSYLAGAGLAF. Over 2480–3390 the chain is Cytoplasmic; the sequence is SIMKSVGTGK…KEEESEGAIW (911 aa). Residues 2492–2753 form the mRNA cap 0-1 NS5-type MT domain; it reads TGSQGETLGE…DVDLGAGTRH (262 aa). S2546 serves as a coordination point for S-adenosyl-L-methionine. At S2546 the chain carries Phosphoserine. K2551 functions as the For 2'-O-MTase activity in the catalytic mechanism. The SUMO-interacting motif motif lies at 2567–2570; the sequence is VIDL. Residues G2576, W2577, T2594, K2595, D2621, and V2622 each contribute to the S-adenosyl-L-methionine site. The For 2'-O-MTase activity role is filled by D2636. An S-adenosyl-L-methionine-binding site is contributed by I2637. Residues K2670 and E2706 each act as for 2'-O-MTase activity in the active site. Y2708 contributes to the S-adenosyl-L-methionine binding site. Zn(2+) is bound by residues E2927, H2931, C2936, and C2939. A RdRp catalytic domain is found at 3018 to 3168; the sequence is AMYADDTAGW…PIDDRFANAL (151 aa). Zn(2+)-binding residues include H3202, C3218, and C3337.

This sequence in the N-terminal section; belongs to the class I-like SAM-binding methyltransferase superfamily. mRNA cap 0-1 NS5-type methyltransferase family. As to quaternary structure, homodimer. Interacts (via N-terminus) with host EXOC1 (via C-terminus); this interaction results in EXOC1 degradation through the proteasome degradation pathway. Forms heterodimers with envelope protein E in the endoplasmic reticulum and Golgi. In terms of assembly, homodimer; in the endoplasmic reticulum and Golgi. Interacts with protein prM. Interacts with non-structural protein 1. As to quaternary structure, homodimer; Homohexamer when secreted. Interacts with envelope protein E. Interacts (via N-terminus) with serine protease NS3. In terms of assembly, forms a heterodimer with serine protease NS3. May form homooligomers. As to quaternary structure, forms a heterodimer with NS2B. Interacts with NS4B. Interacts with unphosphorylated RNA-directed RNA polymerase NS5; this interaction stimulates RNA-directed RNA polymerase NS5 guanylyltransferase activity. Interacts with host SHFL. Interacts with host MAVS; this interaction inhibits the synthesis of IFN-beta. Interacts with host SHFL. Interacts with host AUP1; the interaction occurs in the presence of Dengue virus NS4B and induces lipophagy which facilitates production of virus progeny particles. In terms of assembly, interacts with serine protease NS3. As to quaternary structure, homodimer. Interacts with host STAT2; this interaction inhibits the phosphorylation of the latter, and, when all viral proteins are present (polyprotein), targets STAT2 for degradation. Interacts with serine protease NS3. Specific enzymatic cleavages in vivo yield mature proteins. Cleavages in the lumen of endoplasmic reticulum are performed by host signal peptidase, whereas cleavages in the cytoplasmic side are performed by serine protease NS3. Signal cleavage at the 2K-4B site requires a prior NS3 protease-mediated cleavage at the 4A-2K site. Post-translationally, cleaved in post-Golgi vesicles by a host furin, releasing the mature small envelope protein M, and peptide pr. This cleavage is incomplete as up to 30% of viral particles still carry uncleaved prM. In terms of processing, N-glycosylated. N-glycosylated. The excreted form is glycosylated and this is required for efficient secretion of the protein from infected cells. Post-translationally, acetylated by host KAT5. Acetylation modulates NS3 RNA-binding and unwinding activities and plays an important positive role for viral replication. In terms of processing, sumoylation of RNA-directed RNA polymerase NS5 increases NS5 protein stability allowing proper viral RNA replication. Phosphorylated on serines residues. This phosphorylation may trigger NS5 nuclear localization.

It localises to the virion. It is found in the host nucleus. The protein localises to the host cytoplasm. The protein resides in the host perinuclear region. Its subcellular location is the secreted. It localises to the virion membrane. It is found in the host endoplasmic reticulum membrane. The protein localises to the host mitochondrion. It catalyses the reaction Selective hydrolysis of -Xaa-Xaa-|-Yaa- bonds in which each of the Xaa can be either Arg or Lys and Yaa can be either Ser or Ala.. The catalysed reaction is RNA(n) + a ribonucleoside 5'-triphosphate = RNA(n+1) + diphosphate. It carries out the reaction a ribonucleoside 5'-triphosphate + H2O = a ribonucleoside 5'-diphosphate + phosphate + H(+). The enzyme catalyses ATP + H2O = ADP + phosphate + H(+). It catalyses the reaction a 5'-end (5'-triphosphoguanosine)-ribonucleoside in mRNA + S-adenosyl-L-methionine = a 5'-end (N(7)-methyl 5'-triphosphoguanosine)-ribonucleoside in mRNA + S-adenosyl-L-homocysteine. The catalysed reaction is a 5'-end (N(7)-methyl 5'-triphosphoguanosine)-ribonucleoside in mRNA + S-adenosyl-L-methionine = a 5'-end (N(7)-methyl 5'-triphosphoguanosine)-(2'-O-methyl-ribonucleoside) in mRNA + S-adenosyl-L-homocysteine + H(+). Functionally, plays a role in virus budding by binding to the cell membrane and gathering the viral RNA into a nucleocapsid that forms the core of a mature virus particle. During virus entry, may induce genome penetration into the host cytoplasm after hemifusion induced by the surface proteins. Can migrate to the cell nucleus where it modulates host functions. Overcomes the anti-viral effects of host EXOC1 by sequestering and degrading the latter through the proteasome degradation pathway. Its function is as follows. Inhibits RNA silencing by interfering with host Dicer. In terms of biological role, prevents premature fusion activity of envelope proteins in trans-Golgi by binding to envelope protein E at pH6.0. After virion release in extracellular space, gets dissociated from E dimers. Acts as a chaperone for envelope protein E during intracellular virion assembly by masking and inactivating envelope protein E fusion peptide. prM is the only viral peptide matured by host furin in the trans-Golgi network probably to avoid catastrophic activation of the viral fusion activity in acidic Golgi compartment prior to virion release. prM-E cleavage is inefficient, and many virions are only partially matured. These uncleaved prM would play a role in immune evasion. Functionally, may play a role in virus budding. Exerts cytotoxic effects by activating a mitochondrial apoptotic pathway through M ectodomain. May display a viroporin activity. Its function is as follows. Binds to host cell surface receptor and mediates fusion between viral and cellular membranes. Envelope protein is synthesized in the endoplasmic reticulum in the form of heterodimer with protein prM. They play a role in virion budding in the ER, and the newly formed immature particle is covered with 60 spikes composed of heterodimer between precursor prM and envelope protein E. The virion is transported to the Golgi apparatus where the low pH causes dissociation of PrM-E heterodimers and formation of E homodimers. prM-E cleavage is inefficient, and many virions are only partially matured. These uncleaved prM would play a role in immune evasion. In terms of biological role, involved in immune evasion, pathogenesis and viral replication. Once cleaved off the polyprotein, is targeted to three destinations: the viral replication cycle, the plasma membrane and the extracellular compartment. Essential for viral replication. Required for formation of the replication complex and recruitment of other non-structural proteins to the ER-derived membrane structures. Excreted as a hexameric lipoparticle that plays a role against host immune response. Antagonizing the complement function. Binds to the host macrophages and dendritic cells. Inhibits signal transduction originating from Toll-like receptor 3 (TLR3). Disrupts the host endothelial glycocalyx layer of host pulmonary microvascular endothelial cells, inducing degradation of sialic acid and shedding of heparan sulfate proteoglycans. NS1 induces expression of sialidases, heparanase, and activates cathepsin L, which activates heparanase via enzymatic cleavage. These effects are probably linked to the endothelial hyperpermeability observed in severe dengue disease. Functionally, component of the viral RNA replication complex that functions in virion assembly and antagonizes the host immune response. Its function is as follows. Required cofactor for the serine protease function of NS3. May have membrane-destabilizing activity and form viroporins. In terms of biological role, displays three enzymatic activities: serine protease, NTPase and RNA helicase. NS3 serine protease, in association with NS2B, performs its autocleavage and cleaves the polyprotein at dibasic sites in the cytoplasm: C-prM, NS2A-NS2B, NS2B-NS3, NS3-NS4A, NS4A-2K and NS4B-NS5. NS3 RNA helicase binds RNA and unwinds dsRNA in the 3' to 5' direction. Regulates the ATPase activity of the NS3 helicase activity. NS4A allows NS3 helicase to conserve energy during unwinding. Plays a role in the inhibition of the host innate immune response. Interacts with host MAVS and thereby prevents the interaction between RIGI and MAVS. In turn, IFN-beta production is impaired. Interacts with host AUP1 which mediates induction of lipophagy in host cells and facilitates production of virus progeny particles. Functionally, functions as a signal peptide for NS4B and is required for the interferon antagonism activity of the latter. Its function is as follows. Induces the formation of ER-derived membrane vesicles where the viral replication takes place. Inhibits interferon (IFN)-induced host STAT1 phosphorylation and nuclear translocation, thereby preventing the establishment of cellular antiviral state by blocking the IFN-alpha/beta pathway. In terms of biological role, replicates the viral (+) and (-) RNA genome, and performs the capping of genomes in the cytoplasm. NS5 methylates viral RNA cap at guanine N-7 and ribose 2'-O positions. Besides its role in RNA genome replication, also prevents the establishment of cellular antiviral state by blocking the interferon-alpha/beta (IFN-alpha/beta) signaling pathway. Inhibits host TYK2 and STAT2 phosphorylation, thereby preventing activation of JAK-STAT signaling pathway. This Dengue virus type 3 (strain Sri Lanka/1266/2000) (DENV-3) protein is Genome polyprotein (pol).